Consider the following 130-residue polypeptide: Cyclin-dependent kinase 4 inhibitor B (130 aa).

4 ANK repeats span residues 5–34, 38–66, 71–100, and 104–130; these read GSDAGLATAAARGQVETVRQLLEAGADPNA, FGRRPIQVMMMGSAQVAELLLLHGAEPNC, TLTRPVHDAAREGFLDTLMVLHKAGARLDV, and WGRLPVDLAEEQGHRDIARYLHAATGD. Thr-12 bears the Phosphothreonine mark.

It belongs to the CDKN2 cyclin-dependent kinase inhibitor family. In terms of assembly, heterodimer of CDKN2B with CDK4 or CDK6. As to expression, expression abundant in lung, less abundant in testis, barely detectable in liver, and not detectable in neonatal kidney, adult kidney, brain, heart, or spleen.

Functionally, interacts strongly with CDK4 and CDK6. Potent inhibitor. Potential effector of TGF-beta induced cell cycle arrest. This chain is Cyclin-dependent kinase 4 inhibitor B (Cdkn2b), found in Rattus norvegicus (Rat).